The primary structure comprises 356 residues: GDP-mannose:di-myo-inositol-1,3'-phosphate beta-1,2-mannosyltransferase (356 aa).

The protein belongs to the MDIP synthase family. Mg(2+) serves as cofactor.

The catalysed reaction is bis(myo-inositol) 1,3'-phosphate + GDP-alpha-D-mannose = 2-O-(beta-D-mannosyl)-bis(myo-inositol) 1,3'-phosphate + GDP + H(+). It carries out the reaction 2-O-(beta-D-mannosyl)-bis(myo-inositol) 1,3'-phosphate + GDP-alpha-D-mannose = 2-O-(beta-D-mannosyl-(1-&gt;2)-beta-D-mannosyl)-bis(myo-inositol) 1,3'-phosphate + GDP + H(+). The enzyme catalyses bis(myo-inositol) 1,3'-phosphate + 2 GDP-alpha-D-mannose = 2-O-(beta-D-mannosyl-(1-&gt;2)-beta-D-mannosyl)-bis(myo-inositol) 1,3'-phosphate + 2 GDP + 2 H(+). In terms of biological role, catalyzes the transfer of the mannosyl group from GDP-mannose to di-myo-inositol-1,3'-phosphate (DIP), producing mannosyl-di-myo-inositol phosphate (MDIP). Can also use MDIP as an acceptor of a second mannose residue, yielding di-mannosyl-di-myo-inositol phosphate (MMDIP). In Aquifex aeolicus (strain VF5), this protein is GDP-mannose:di-myo-inositol-1,3'-phosphate beta-1,2-mannosyltransferase.